Here is a 122-residue protein sequence, read N- to C-terminus: uncharacterized protein (122 aa).

Transmembrane regions (helical) follow at residues 33–53 (ALGLLAAAVALVQLVPELTIP), 58–78 (VLGVVLAILAILTSGMGLLRW), and 97–117 (PGYLAVGLCVVGVVALALVVA).

This sequence to E.coli YidH.

The protein resides in the cell membrane. This is an uncharacterized protein from Mycobacterium tuberculosis (strain CDC 1551 / Oshkosh).